Reading from the N-terminus, the 791-residue chain is Lon protease (791 aa).

Residues 28–223 (LPVVVISEIM…YILQDIQSLL (196 aa)) form the Lon N-terminal domain. An ATP-binding site is contributed by 374–381 (GPPGVGKT). One can recognise a Lon proteolytic domain in the interval 610–791 (KEKIGSTNGL…SDVFSQVFVV (182 aa)). Active-site residues include Ser-697 and Lys-740.

This sequence belongs to the peptidase S16 family. As to quaternary structure, homohexamer. Organized in a ring with a central cavity.

It is found in the cytoplasm. The enzyme catalyses Hydrolysis of proteins in presence of ATP.. Its function is as follows. ATP-dependent serine protease that mediates the selective degradation of mutant and abnormal proteins as well as certain short-lived regulatory proteins. Required for cellular homeostasis and for survival from DNA damage and developmental changes induced by stress. Degrades polypeptides processively to yield small peptide fragments that are 5 to 10 amino acids long. Binds to DNA in a double-stranded, site-specific manner. In Aster yellows witches'-broom phytoplasma (strain AYWB), this protein is Lon protease.